Consider the following 311-residue polypeptide: Probable mitochondrial phosphate carrier protein (311 aa).

Residues 1-23 lie on the Mitochondrial intermembrane side of the membrane; that stretch reads MSTPLIPPAPPKKTLQLYTPQYY. Solcar repeat units lie at residues 21–105, 118–203, and 219–303; these read QYYG…FKHK, YRTS…IVEA, and EKIG…FKIM. The helical transmembrane segment at 24–44 threads the bilayer; that stretch reads GLCTLGGLLACGTTHSAITPL. Over 45–67 the chain is Mitochondrial matrix; it reads DLIKCRKQVNPNIYPGNIAGFKT. Residues 68-88 traverse the membrane as a helical segment; sequence ILSKEGLRGLYTGGMPTLIGY. Topologically, residues 89 to 120 are mitochondrial intermembrane; it reads SLQGCGKYGFYELFKHKYSTLVGAQKAHEYRT. Residues 121 to 141 form a helical membrane-spanning segment; the sequence is SIYLAASASAELLADIMLCPM. Residues 142–171 are Mitochondrial matrix-facing; that stretch reads EAIKVRVQTSNPRFANTTREAWSKIVTNEG. A helical transmembrane segment spans residues 172–192; that stretch reads FGTLYRGLAPLWFRQIPYTMM. Over 193-220 the chain is Mitochondrial intermembrane; it reads KFASFERIVEALYTYIGKPKNMYSKAEK. A helical membrane pass occupies residues 221–241; that stretch reads IGISFAGGYMAGVLCAIISHP. Residues 242–269 lie on the Mitochondrial matrix side of the membrane; it reads ADVMVSKLNSNKKAGEGAGAAAARIYKE. Residues 270–290 traverse the membrane as a helical segment; that stretch reads IGFSGLWNGLGVRIVMIGTLT. Residues 291–311 are Mitochondrial intermembrane-facing; the sequence is GAQWLIYDSFKIMCGFPATGA.

It belongs to the mitochondrial carrier (TC 2.A.29) family.

The protein resides in the mitochondrion inner membrane. In terms of biological role, transport of phosphate groups from the cytosol to the mitochondrial matrix. In Schizosaccharomyces pombe (strain 972 / ATCC 24843) (Fission yeast), this protein is Probable mitochondrial phosphate carrier protein.